The following is a 329-amino-acid chain: MWVFKFLLLPMVSFALSPEEMLDTQWELWKKTHQKQYNSKVDEISRRLIWEKNLKQISAHNLEASLGVHTYELAMNHLGDMTSEEVVQKMTGLRIPPSRSYSNDTLYTPEWEGRVPDSIDYRKKGYVTPVKNQGQCGSCWAFSSAGALEGQLKKKTGKLLALSPQNLVDCVTENYGCGGGYMTTAFQYVQQNGGIDSEDAYPYVGQDESCMYNATAKAAKCRGYREIPVGNEKALKRAVARVGPISVSIDASLASFQFYSRGVYYDENCDRDNVNHAVLVVGYGTQKGSKHWIIKNSWGESWGNKGYALLARNKNNACGITNMASFPKM.

The N-terminal stretch at 1-15 (MWVFKFLLLPMVSFA) is a signal peptide. Positions 16–114 (LSPEEMLDTQ…TLYTPEWEGR (99 aa)) are cleaved as a propeptide — activation peptide. The N-linked (GlcNAc...) asparagine glycan is linked to N103. 2 cysteine pairs are disulfide-bonded: C136–C177 and C170–C210. C139 is an active-site residue. Residue N213 is glycosylated (N-linked (GlcNAc...) asparagine). A disulfide bridge connects residues C269 and C318. Residues H276 and N296 contribute to the active site.

The protein belongs to the peptidase C1 family. Predominantly expressed in bones. Expressed in thyroid epithelial cells.

It localises to the lysosome. The protein resides in the secreted. It is found in the apical cell membrane. The enzyme catalyses Broad proteolytic activity. With small-molecule substrates and inhibitors, the major determinant of specificity is P2, which is preferably Leu, Met &gt; Phe, and not Arg.. Functionally, thiol protease involved in osteoclastic bone resorption. Displays potent endoprotease activity against fibrinogen at acid pH. May play an important role in extracellular matrix degradation. Involved in the release of thyroid hormone thyroxine (T4) by limited proteolysis of TG/thyroglobulin in the thyroid follicle lumen. The polypeptide is Cathepsin K (Ctsk) (Mus musculus (Mouse)).